Reading from the N-terminus, the 351-residue chain is N(4)-bis(aminopropyl)spermidine synthase (351 aa).

The protein belongs to the branched-chain polyamine synthase family.

The protein localises to the cytoplasm. It carries out the reaction 2 S-adenosyl 3-(methylsulfanyl)propylamine + spermidine = N(4)-bis(aminopropyl)spermidine + 2 S-methyl-5'-thioadenosine + 2 H(+). It functions in the pathway amine and polyamine biosynthesis. Its function is as follows. Involved in the biosynthesis of branched-chain polyamines, which support the growth of thermophiles under high-temperature conditions. Catalyzes the sequential condensation of spermidine with the aminopropyl groups of decarboxylated S-adenosylmethionines to produce N(4)-bis(aminopropyl)spermidine via N(4)-aminopropylspermidine. Can also use spermine to produce N(4)-aminopropylspermine. The polypeptide is N(4)-bis(aminopropyl)spermidine synthase (Thermococcus kodakarensis (strain ATCC BAA-918 / JCM 12380 / KOD1) (Pyrococcus kodakaraensis (strain KOD1))).